A 280-amino-acid chain; its full sequence is Putative pyruvate, phosphate dikinase regulatory protein (280 aa).

ADP is bound at residue 152–159; the sequence is GVSRTSKS.

The protein belongs to the pyruvate, phosphate/water dikinase regulatory protein family. PDRP subfamily.

It carries out the reaction N(tele)-phospho-L-histidyl/L-threonyl-[pyruvate, phosphate dikinase] + ADP = N(tele)-phospho-L-histidyl/O-phospho-L-threonyl-[pyruvate, phosphate dikinase] + AMP + H(+). The catalysed reaction is N(tele)-phospho-L-histidyl/O-phospho-L-threonyl-[pyruvate, phosphate dikinase] + phosphate + H(+) = N(tele)-phospho-L-histidyl/L-threonyl-[pyruvate, phosphate dikinase] + diphosphate. In terms of biological role, bifunctional serine/threonine kinase and phosphorylase involved in the regulation of the pyruvate, phosphate dikinase (PPDK) by catalyzing its phosphorylation/dephosphorylation. This Anaplasma phagocytophilum (strain HZ) protein is Putative pyruvate, phosphate dikinase regulatory protein.